A 435-amino-acid polypeptide reads, in one-letter code: NADH-ubiquinone oxidoreductase chain 4 (435 aa).

The next 13 helical transmembrane spans lie at 27-47 (VLTI…ELNG), 53-73 (FVMG…YLSS), 80-100 (ASFN…FSVS), 102-122 (FFLF…LIVG), 132-152 (AGGY…WGVS), 177-197 (LWWL…FHLW), 206-226 (PVAG…YGLL), 239-259 (VFFV…GLAC), 267-285 (CLVA…LGVL), 295-317 (AIII…NAIY), 324-344 (LLVM…MCFL), 372-394 (SXAF…LYLY), and 414-434 (LCDV…FMFM).

It belongs to the complex I subunit 4 family.

Its subcellular location is the mitochondrion membrane. It catalyses the reaction a ubiquinone + NADH + 5 H(+)(in) = a ubiquinol + NAD(+) + 4 H(+)(out). Core subunit of the mitochondrial membrane respiratory chain NADH dehydrogenase (Complex I) that is believed to belong to the minimal assembly required for catalysis. Complex I functions in the transfer of electrons from NADH to the respiratory chain. The immediate electron acceptor for the enzyme is believed to be ubiquinone. The sequence is that of NADH-ubiquinone oxidoreductase chain 4 (ND4) from Mytilus edulis (Blue mussel).